The sequence spans 225 residues: GTP cyclohydrolase III (225 aa).

The protein belongs to the archaeal-type GTP cyclohydrolase family.

It carries out the reaction GTP + 3 H2O = 2-amino-5-formylamino-6-(5-phospho-D-ribosylamino)pyrimidin-4(3H)-one + 2 phosphate + 2 H(+). Catalyzes the formation of 2-amino-5-formylamino-6-ribofuranosylamino-4(3H)-pyrimidinone ribonucleotide monophosphate and inorganic phosphate from GTP. Also has an independent pyrophosphate phosphohydrolase activity. This is GTP cyclohydrolase III from Sulfurisphaera tokodaii (strain DSM 16993 / JCM 10545 / NBRC 100140 / 7) (Sulfolobus tokodaii).